Consider the following 80-residue polypeptide: MEARVLWLLALVLALGSSSLADQYVGLSENLCAVPAKNRVDCGYPEISPEQCVNRGCCFDSSIPEVPWCFKPLQDTECTF.

Residues 1-21 (MEARVLWLLALVLALGSSSLA) form the signal peptide. The region spanning 30–73 (NLCAVPAKNRVDCGYPEISPEQCVNRGCCFDSSIPEVPWCFKPL) is the P-type domain. 3 disulfides stabilise this stretch: cysteine 32-cysteine 58, cysteine 42-cysteine 57, and cysteine 52-cysteine 69.

Monomer. Homodimer; disulfide-linked.

It is found in the secreted. The protein localises to the extracellular space. It localises to the extracellular matrix. The protein resides in the cytoplasm. Involved in the maintenance and repair of the intestinal mucosa. Promotes the mobility of epithelial cells in healing processes (motogen). In Felis catus (Cat), this protein is Trefoil factor 3 (TFF3).